Here is a 149-residue protein sequence, read N- to C-terminus: Nucleoside diphosphate kinase (149 aa).

The ATP site is built by K9, F57, R85, T91, R102, and N112. H115 functions as the Pros-phosphohistidine intermediate in the catalytic mechanism.

It belongs to the NDK family. In terms of assembly, homotetramer. The cofactor is Mg(2+).

Its subcellular location is the cytoplasm. The enzyme catalyses a 2'-deoxyribonucleoside 5'-diphosphate + ATP = a 2'-deoxyribonucleoside 5'-triphosphate + ADP. The catalysed reaction is a ribonucleoside 5'-diphosphate + ATP = a ribonucleoside 5'-triphosphate + ADP. Its function is as follows. Major role in the synthesis of nucleoside triphosphates other than ATP. The ATP gamma phosphate is transferred to the NDP beta phosphate via a ping-pong mechanism, using a phosphorylated active-site intermediate. The sequence is that of Nucleoside diphosphate kinase from Staphylococcus aureus (strain Mu3 / ATCC 700698).